Here is a 951-residue protein sequence, read N- to C-terminus: Valine--tRNA ligase (951 aa).

Positions 42 to 52 (PNVTGSLHMGH) match the 'HIGH' region motif. The short motif at 554–558 (KMSKS) is the 'KMSKS' region element. Lys-557 is a binding site for ATP. Positions 880–944 (AGLINKEDEL…AEAKAKLIEQ (65 aa)) form a coiled coil.

Belongs to the class-I aminoacyl-tRNA synthetase family. ValS type 1 subfamily. Monomer.

The protein resides in the cytoplasm. It catalyses the reaction tRNA(Val) + L-valine + ATP = L-valyl-tRNA(Val) + AMP + diphosphate. Functionally, catalyzes the attachment of valine to tRNA(Val). As ValRS can inadvertently accommodate and process structurally similar amino acids such as threonine, to avoid such errors, it has a 'posttransfer' editing activity that hydrolyzes mischarged Thr-tRNA(Val) in a tRNA-dependent manner. In Escherichia coli (strain K12), this protein is Valine--tRNA ligase (valS).